We begin with the raw amino-acid sequence, 87 residues long: Phosphoribosyl-ATP pyrophosphatase (87 aa).

Belongs to the PRA-PH family.

Its subcellular location is the cytoplasm. The catalysed reaction is 1-(5-phospho-beta-D-ribosyl)-ATP + H2O = 1-(5-phospho-beta-D-ribosyl)-5'-AMP + diphosphate + H(+). The protein operates within amino-acid biosynthesis; L-histidine biosynthesis; L-histidine from 5-phospho-alpha-D-ribose 1-diphosphate: step 2/9. This chain is Phosphoribosyl-ATP pyrophosphatase, found in Saccharopolyspora erythraea (strain ATCC 11635 / DSM 40517 / JCM 4748 / NBRC 13426 / NCIMB 8594 / NRRL 2338).